Consider the following 121-residue polypeptide: Large ribosomal subunit protein bL19 (121 aa).

This sequence belongs to the bacterial ribosomal protein bL19 family.

Functionally, this protein is located at the 30S-50S ribosomal subunit interface and may play a role in the structure and function of the aminoacyl-tRNA binding site. In Polaromonas sp. (strain JS666 / ATCC BAA-500), this protein is Large ribosomal subunit protein bL19.